A 136-amino-acid chain; its full sequence is Transcription antitermination protein NusB (136 aa).

This sequence belongs to the NusB family.

Involved in transcription antitermination. Required for transcription of ribosomal RNA (rRNA) genes. Binds specifically to the boxA antiterminator sequence of the ribosomal RNA (rrn) operons. The protein is Transcription antitermination protein NusB of Treponema denticola (strain ATCC 35405 / DSM 14222 / CIP 103919 / JCM 8153 / KCTC 15104).